The primary structure comprises 263 residues: Leukocyte-associated immunoglobulin-like receptor 1 (263 aa).

The signal sequence occupies residues 1 to 21; sequence MSLHPVILLVLVLCLGWKINT. At 22–144 the chain is on the extracellular side; the sequence is QEGSLPDITI…TSWLKTYSIY (123 aa). The 89-residue stretch at 27-115 folds into the Ig-like C2-type domain; that stretch reads PDITIFPNSS…TWSERSKTLE (89 aa). N-linked (GlcNAc...) asparagine glycosylation is found at asparagine 34 and asparagine 90. Cysteine 49 and cysteine 99 are disulfide-bonded. Residues 145–165 traverse the membrane as a helical segment; sequence IFTVVSVIFLLCLSALLFCFL. Residues 166-263 lie on the Cytoplasmic side of the membrane; sequence RHRQKKQGLP…SSTYAAIIRH (98 aa). 2 consecutive short sequence motifs (ITIM motif) follow at residues 226–231 and 255–260; these read VTYIQL and STYAAI. Residues tyrosine 228 and tyrosine 257 each carry the phosphotyrosine modification.

In terms of assembly, interacts with SH2 domains of tyrosine-protein phosphatases PTPN6 and PTPN11. The interaction with PTPN6 is constitutive. Interacts with the SH2 domain of CSK. Binds with high affinity to extracellular matrix collagens, the interaction is functionally important. Post-translationally, phosphorylation at Tyr-228 and Tyr-257 activates it. May be phosphorylated by LCK. In terms of processing, N-glycosylated. In terms of tissue distribution, expressed in lymphoid organs and in cell lines of hemopoietic origin.

It localises to the cell membrane. Functionally, functions as an inhibitory receptor that plays a constitutive negative regulatory role on cytolytic function of natural killer (NK) cells, B-cells and T-cells. Activation by Tyr phosphorylation results in recruitment and activation of the phosphatases PTPN6 and PTPN11. It also reduces the increase of intracellular calcium evoked by B-cell receptor ligation. May also play its inhibitory role independently of SH2-containing phosphatases. Modulates cytokine production in CD4+ T-cells, down-regulating IL2 and IFNG production while inducing secretion of transforming growth factor beta. Also down-regulates IgG and IgE production in B-cells as well as IL8, IL10 and TNF secretion. Inhibits proliferation and induces apoptosis in myeloid leukemia cell lines as well as prevents nuclear translocation of NF-kappa-B p65 subunit/RELA and phosphorylation of I-kappa-B alpha/CHUK in these cells. Inhibits the differentiation of peripheral blood precursors towards dendritic cells. The protein is Leukocyte-associated immunoglobulin-like receptor 1 (Lair1) of Mus musculus (Mouse).